The sequence spans 170 residues: Shikimate kinase (170 aa).

An ATP-binding site is contributed by 15-20 (GAGKTT). Residue threonine 19 coordinates Mg(2+). 3 residues coordinate substrate: aspartate 37, arginine 61, and glycine 83. Residue arginine 121 participates in ATP binding. Position 140 (arginine 140) interacts with substrate.

It belongs to the shikimate kinase family. In terms of assembly, monomer. The cofactor is Mg(2+).

Its subcellular location is the cytoplasm. The enzyme catalyses shikimate + ATP = 3-phosphoshikimate + ADP + H(+). Its pathway is metabolic intermediate biosynthesis; chorismate biosynthesis; chorismate from D-erythrose 4-phosphate and phosphoenolpyruvate: step 5/7. Its function is as follows. Catalyzes the specific phosphorylation of the 3-hydroxyl group of shikimic acid using ATP as a cosubstrate. The protein is Shikimate kinase of Neisseria meningitidis serogroup C (strain 053442).